The primary structure comprises 286 residues: Deleted in azoospermia-like-A (286 aa).

An RRM domain is found at 33–114 (NTVFVGGIDI…PAIRKICTYV (82 aa)). Residues 155-180 (ACPYPSSPPMAIQQIPVGCQQPGYFQ) form the DAZ domain.

The protein belongs to the RRM DAZ family. Interacts with the C-terminus of pabp1 and with epabp. Prior to oocyte maturation, found in a complex with epabp and pum2 proteins and spdy1 mRNA; pum2 dissociates from the complex during maturation. In terms of tissue distribution, germ-line specific. Oocyte mRNA expression is first restricted to the granulo-fibrillar material (GFM) of the mitochondrial cloud and then to the oocyte germ plasm at the vegetal cortex. Remains an mRNA component of the germ plasm until the neurula stage. In 2-8 cell embryos, expressed in the germ plasm matrix between germinal granules and mitochondria. Expressed in primordial germ cells (PGCs) later in embryogenesis. In addition to the ovaries of adult females, expressed in the testis of adult and juvenile males in spermatogonia and spermatocytes. The protein is restricted to the embryonic germ plasm and primordial germ cells.

Its subcellular location is the cytoplasm. Functionally, RNA-binding protein that is required for primordial germ cell (PGC) differentiation and indirectly necessary for the migration of PGCs through the endoderm. May promote meiotic cell division during spermatogenesis. Shows a preference for G- and U-rich RNAs and probably binds the 3'-UTR of target mRNAs. Stimulates the initiation of translation of mRNAs through the recruitment of poly(A)-binding proteins (PABPs). This chain is Deleted in azoospermia-like-A (dazl-a), found in Xenopus laevis (African clawed frog).